We begin with the raw amino-acid sequence, 543 residues long: Probable bifunctional tRNA threonylcarbamoyladenosine biosynthesis protein (543 aa).

The interval 1–329 (MDISKDLICI…YRSDMVEVNW (329 aa)) is kae1. Fe cation contacts are provided by His-112, His-116, and Tyr-133. L-threonylcarbamoyladenylate contacts are provided by residues 133 to 137 (YVSGG), Asp-165, Gly-178, Glu-182, and Asn-262. Residue Asp-290 coordinates Fe cation. Residues 342-543 (IIPEHLIGKG…KEVEKRARYL (202 aa)) enclose the Protein kinase domain. ATP-binding positions include 348–356 (IGKGAEADI) and Lys-369. The active-site Proton acceptor; for kinase activity is Asp-461.

It in the N-terminal section; belongs to the KAE1 / TsaD family. In the C-terminal section; belongs to the protein kinase superfamily. Tyr protein kinase family. BUD32 subfamily. As to quaternary structure, component of the KEOPS complex that consists of Kae1, Bud32, Cgi121 and Pcc1; the whole complex dimerizes. Fe(2+) serves as cofactor.

It is found in the cytoplasm. The catalysed reaction is L-seryl-[protein] + ATP = O-phospho-L-seryl-[protein] + ADP + H(+). It catalyses the reaction L-threonyl-[protein] + ATP = O-phospho-L-threonyl-[protein] + ADP + H(+). The enzyme catalyses L-threonylcarbamoyladenylate + adenosine(37) in tRNA = N(6)-L-threonylcarbamoyladenosine(37) in tRNA + AMP + H(+). In terms of biological role, required for the formation of a threonylcarbamoyl group on adenosine at position 37 (t(6)A37) in tRNAs that read codons beginning with adenine. Is a component of the KEOPS complex that is probably involved in the transfer of the threonylcarbamoyl moiety of threonylcarbamoyl-AMP (TC-AMP) to the N6 group of A37. The Kae1 domain likely plays a direct catalytic role in this reaction. The Bud32 domain probably displays kinase activity that regulates Kae1 function. This chain is Probable bifunctional tRNA threonylcarbamoyladenosine biosynthesis protein, found in Methanococcus maripaludis (strain C6 / ATCC BAA-1332).